We begin with the raw amino-acid sequence, 121 residues long: Small ribosomal subunit protein uS13 (121 aa).

Residues 91 to 121 (HRMSLPVRGQRTRTNARTRRGSRKTVAGRKK) are disordered. The segment covering 100–121 (QRTRTNARTRRGSRKTVAGRKK) has biased composition (basic residues).

The protein belongs to the universal ribosomal protein uS13 family. In terms of assembly, part of the 30S ribosomal subunit. Forms a loose heterodimer with protein S19. Forms two bridges to the 50S subunit in the 70S ribosome.

Its function is as follows. Located at the top of the head of the 30S subunit, it contacts several helices of the 16S rRNA. In the 70S ribosome it contacts the 23S rRNA (bridge B1a) and protein L5 of the 50S subunit (bridge B1b), connecting the 2 subunits; these bridges are implicated in subunit movement. Contacts the tRNAs in the A and P-sites. The polypeptide is Small ribosomal subunit protein uS13 (Prochlorococcus marinus (strain AS9601)).